The sequence spans 322 residues: MAPTSTFPVINMELLAGEERPAAMEQLDDACENWGFFEILNHGISTELMDEVEKMTKDHYKRVREQRFLEFASKTLKEGCDDVNKAEKLDWESTFFVRHLPESNIADIPDLDDDYRRLMKRFAAELETLAERLLDLLCENLGLEKGYLTKAFRGPAGAPTFGTKVSSYPPCPRPDLVEGLRAHTDAGGIILLFQDDRVGGLQLLKDGEWVDVPPMRHSIVVNLGDQLEVITNGRYKSVIHRVVAQTDGNRMSIASFYNPGSDAVISPAPALVKEEEAVVAYPKFVFEDYMKLYVRHKFEAKEPRFEAFKSMETETSNRIAIA.

Residues 159-259 enclose the Fe2OG dioxygenase domain; that stretch reads PTFGTKVSSY…RMSIASFYNP (101 aa). Fe cation is bound by residues histidine 183, aspartate 185, and histidine 240.

It belongs to the iron/ascorbate-dependent oxidoreductase family. The cofactor is Fe cation.

It carries out the reaction 1-aminocyclopropane-1-carboxylate + L-ascorbate + O2 = ethene + L-dehydroascorbate + hydrogen cyanide + CO2 + 2 H2O. Its pathway is alkene biosynthesis; ethylene biosynthesis via S-adenosyl-L-methionine; ethylene from S-adenosyl-L-methionine: step 2/2. In Oryza sativa subsp. japonica (Rice), this protein is 1-aminocyclopropane-1-carboxylate oxidase 1 (ACO1).